Consider the following 211-residue polypeptide: Ribonuclease HII (211 aa).

The region spanning 24–211 (QLIAGVDEVG…KPVKKALGLD (188 aa)) is the RNase H type-2 domain. A divalent metal cation-binding residues include aspartate 30, glutamate 31, and aspartate 122.

This sequence belongs to the RNase HII family. Requires Mn(2+) as cofactor. The cofactor is Mg(2+).

Its subcellular location is the cytoplasm. It catalyses the reaction Endonucleolytic cleavage to 5'-phosphomonoester.. Functionally, endonuclease that specifically degrades the RNA of RNA-DNA hybrids. This Vibrio parahaemolyticus serotype O3:K6 (strain RIMD 2210633) protein is Ribonuclease HII.